The sequence spans 201 residues: MSRYRGPRFKKIRRLGALPGLTNKKPRNGSDLRNQSRSGKKSQYRIRLEEKQKLRFHYGLTERQLLKYVRIARKAKGSTGQVLLQLLEMRLDNILFRLGMASTIPAARQLVNHRHILVNGRIVDIPSYRCKPRDIITAKDEQKSRALIQISLDSSPHEELPNHLTLHPFQYKGLVNQIIDSKWVGLKINELLVVEYYSRQT.

The interval 17–44 is disordered; it reads ALPGLTNKKPRNGSDLRNQSRSGKKSQY. Residues 89 to 149 form the S4 RNA-binding domain; the sequence is MRLDNILFRL…DEQKSRALIQ (61 aa).

This sequence belongs to the universal ribosomal protein uS4 family. In terms of assembly, part of the 30S ribosomal subunit. Contacts protein S5. The interaction surface between S4 and S5 is involved in control of translational fidelity.

Its subcellular location is the plastid. The protein resides in the chloroplast. One of the primary rRNA binding proteins, it binds directly to 16S rRNA where it nucleates assembly of the body of the 30S subunit. Functionally, with S5 and S12 plays an important role in translational accuracy. This chain is Small ribosomal subunit protein uS4c (rps4), found in Nicotiana sylvestris (Wood tobacco).